Reading from the N-terminus, the 627-residue chain is Membrane protein insertase YidC (627 aa).

The chain crosses the membrane as a helical span at residues leucine 8–proline 28. The segment covering lysine 33–glycine 57 has biased composition (polar residues). The segment at lysine 33–valine 68 is disordered. Positions lysine 58–valine 68 are enriched in basic and acidic residues. The next 4 membrane-spanning stretches (helical) occupy residues phenylalanine 417 to phenylalanine 437, valine 488 to phenylalanine 508, alanine 536 to glycine 556, and methionine 575 to valine 595.

The protein belongs to the OXA1/ALB3/YidC family. Type 1 subfamily. As to quaternary structure, interacts with the Sec translocase complex via SecD. Specifically interacts with transmembrane segments of nascent integral membrane proteins during membrane integration.

The protein localises to the cell inner membrane. Its function is as follows. Required for the insertion and/or proper folding and/or complex formation of integral membrane proteins into the membrane. Involved in integration of membrane proteins that insert both dependently and independently of the Sec translocase complex, as well as at least some lipoproteins. Aids folding of multispanning membrane proteins. This is Membrane protein insertase YidC from Leptospira interrogans serogroup Icterohaemorrhagiae serovar copenhageni (strain Fiocruz L1-130).